The sequence spans 873 residues: Alanine--tRNA ligase (873 aa).

H563, H567, C664, and H668 together coordinate Zn(2+).

This sequence belongs to the class-II aminoacyl-tRNA synthetase family. Zn(2+) serves as cofactor.

The protein localises to the cytoplasm. The enzyme catalyses tRNA(Ala) + L-alanine + ATP = L-alanyl-tRNA(Ala) + AMP + diphosphate. Its function is as follows. Catalyzes the attachment of alanine to tRNA(Ala) in a two-step reaction: alanine is first activated by ATP to form Ala-AMP and then transferred to the acceptor end of tRNA(Ala). Also edits incorrectly charged Ser-tRNA(Ala) and Gly-tRNA(Ala) via its editing domain. The sequence is that of Alanine--tRNA ligase from Aromatoleum aromaticum (strain DSM 19018 / LMG 30748 / EbN1) (Azoarcus sp. (strain EbN1)).